Consider the following 522-residue polypeptide: Glutamate--cysteine ligase (522 aa).

Belongs to the glutamate--cysteine ligase type 1 family. Type 1 subfamily.

It carries out the reaction L-cysteine + L-glutamate + ATP = gamma-L-glutamyl-L-cysteine + ADP + phosphate + H(+). It participates in sulfur metabolism; glutathione biosynthesis; glutathione from L-cysteine and L-glutamate: step 1/2. The sequence is that of Glutamate--cysteine ligase from Shewanella pealeana (strain ATCC 700345 / ANG-SQ1).